The primary structure comprises 414 residues: tRNA(Ile)-lysidine synthase (414 aa).

13–18 (SGGIDS) serves as a coordination point for ATP.

The protein belongs to the tRNA(Ile)-lysidine synthase family.

The protein resides in the cytoplasm. It catalyses the reaction cytidine(34) in tRNA(Ile2) + L-lysine + ATP = lysidine(34) in tRNA(Ile2) + AMP + diphosphate + H(+). Ligates lysine onto the cytidine present at position 34 of the AUA codon-specific tRNA(Ile) that contains the anticodon CAU, in an ATP-dependent manner. Cytidine is converted to lysidine, thus changing the amino acid specificity of the tRNA from methionine to isoleucine. The sequence is that of tRNA(Ile)-lysidine synthase from Thermotoga maritima (strain ATCC 43589 / DSM 3109 / JCM 10099 / NBRC 100826 / MSB8).